The following is a 79-amino-acid chain: Putative defensin-like protein 80 (79 aa).

The first 26 residues, 1 to 26 (MDVQRSSYIFIALSIIAMFLITGVKP), serve as a signal peptide directing secretion. 4 cysteine pairs are disulfide-bonded: Cys-32–Cys-65, Cys-36–Cys-58, Cys-44–Cys-63, and Cys-48–Cys-64.

Belongs to the DEFL family.

It localises to the secreted. This Arabidopsis thaliana (Mouse-ear cress) protein is Putative defensin-like protein 80 (LCR81).